A 332-amino-acid chain; its full sequence is Holliday junction branch migration complex subunit RuvB (332 aa).

Residues 1–181 (MSRILDNELM…FGITGHMEYY (181 aa)) form a large ATPase domain (RuvB-L) region. Residues Leu-20, Arg-21, Gly-62, Lys-65, Thr-66, Thr-67, 128 to 130 (EDF), Arg-171, Tyr-181, and Arg-218 contribute to the ATP site. Thr-66 contacts Mg(2+). Residues 182–252 (EAGDLTEIVE…ITDQALSMLD (71 aa)) form a small ATPAse domain (RuvB-S) region. A head domain (RuvB-H) region spans residues 255–332 (QEGLDYVDQK…EHLGYEYMKE (78 aa)). DNA-binding residues include Arg-291, Arg-310, Arg-312, and Arg-315.

This sequence belongs to the RuvB family. As to quaternary structure, homohexamer. Forms an RuvA(8)-RuvB(12)-Holliday junction (HJ) complex. HJ DNA is sandwiched between 2 RuvA tetramers; dsDNA enters through RuvA and exits via RuvB. An RuvB hexamer assembles on each DNA strand where it exits the tetramer. Each RuvB hexamer is contacted by two RuvA subunits (via domain III) on 2 adjacent RuvB subunits; this complex drives branch migration. In the full resolvosome a probable DNA-RuvA(4)-RuvB(12)-RuvC(2) complex forms which resolves the HJ.

It is found in the cytoplasm. The enzyme catalyses ATP + H2O = ADP + phosphate + H(+). The RuvA-RuvB-RuvC complex processes Holliday junction (HJ) DNA during genetic recombination and DNA repair, while the RuvA-RuvB complex plays an important role in the rescue of blocked DNA replication forks via replication fork reversal (RFR). RuvA specifically binds to HJ cruciform DNA, conferring on it an open structure. The RuvB hexamer acts as an ATP-dependent pump, pulling dsDNA into and through the RuvAB complex. RuvB forms 2 homohexamers on either side of HJ DNA bound by 1 or 2 RuvA tetramers; 4 subunits per hexamer contact DNA at a time. Coordinated motions by a converter formed by DNA-disengaged RuvB subunits stimulates ATP hydrolysis and nucleotide exchange. Immobilization of the converter enables RuvB to convert the ATP-contained energy into a lever motion, pulling 2 nucleotides of DNA out of the RuvA tetramer per ATP hydrolyzed, thus driving DNA branch migration. The RuvB motors rotate together with the DNA substrate, which together with the progressing nucleotide cycle form the mechanistic basis for DNA recombination by continuous HJ branch migration. Branch migration allows RuvC to scan DNA until it finds its consensus sequence, where it cleaves and resolves cruciform DNA. The sequence is that of Holliday junction branch migration complex subunit RuvB from Streptococcus sanguinis (strain SK36).